Consider the following 550-residue polypeptide: Cytokinin dehydrogenase 10 (550 aa).

A signal peptide spans 1–26 (MMPRAQLTTFLIVTSFLSTVPYLRAP). The region spanning 64–245 (VHATPNGVFR…TRARIRLEPA (182 aa)) is the FAD-binding PCMH-type domain. Residues Gly100, Lys101, and Gly102 each contribute to the FAD site. His103 bears the Pros-8alpha-FAD histidine mark. FAD is bound by residues Ser104, Gln108, Asp169, Thr174, Ser180, Ile184, and Ile235. N-linked (GlcNAc...) asparagine glycosylation occurs at Asn289. FAD is bound by residues Tyr489, Ser524, and Gln527. The interval 523 to 550 (LSPGQGIFPPPPPPSPPPPAAGEPITAS) is disordered. Residues 530-543 (FPPPPPPSPPPPAA) are compositionally biased toward pro residues.

It belongs to the oxygen-dependent FAD-linked oxidoreductase family. Monomer. It depends on FAD as a cofactor.

It is found in the secreted. The protein resides in the extracellular space. It catalyses the reaction N(6)-dimethylallyladenine + A + H2O = 3-methyl-2-butenal + adenine + AH2. Functionally, catalyzes the oxidation of cytokinins, a family of N(6)-substituted adenine derivatives that are plant hormones, where the substituent is an isopentenyl group. This chain is Cytokinin dehydrogenase 10 (CKX10), found in Oryza sativa subsp. japonica (Rice).